A 455-amino-acid chain; its full sequence is Chromosomal replication initiator protein DnaA (455 aa).

The tract at residues 1–70 (MTNETWVQVR…RMRLTEAGSP (70 aa)) is domain I, interacts with DnaA modulators. The interval 70–113 (PVERLEFAVSNTPRAPLKEVKAAAPAASPARARPAPPEEDLRGA) is domain II. Positions 87–109 (KEVKAAAPAASPARARPAPPEED) are disordered. Positions 91 to 102 (AAAPAASPARAR) are enriched in low complexity. A domain III, AAA+ region region spans residues 114 to 335 (PLDARFTFDS…GALTRLFAFA (222 aa)). The ATP site is built by Gly-158, Gly-160, Lys-161, and Thr-162. Residues 336 to 455 (SLVGREITLD…LQLLRRLLQA (120 aa)) are domain IV, binds dsDNA.

Belongs to the DnaA family. Oligomerizes as a right-handed, spiral filament on DNA at oriC.

The protein resides in the cytoplasm. In terms of biological role, plays an essential role in the initiation and regulation of chromosomal replication. ATP-DnaA binds to the origin of replication (oriC) to initiate formation of the DNA replication initiation complex once per cell cycle. Binds the DnaA box (a 9 base pair repeat at the origin) and separates the double-stranded (ds)DNA. Forms a right-handed helical filament on oriC DNA; dsDNA binds to the exterior of the filament while single-stranded (ss)DNA is stabiized in the filament's interior. The ATP-DnaA-oriC complex binds and stabilizes one strand of the AT-rich DNA unwinding element (DUE), permitting loading of DNA polymerase. After initiation quickly degrades to an ADP-DnaA complex that is not apt for DNA replication. Binds acidic phospholipids. The sequence is that of Chromosomal replication initiator protein DnaA from Cereibacter sphaeroides (strain ATCC 17029 / ATH 2.4.9) (Rhodobacter sphaeroides).